Here is a 261-residue protein sequence, read N- to C-terminus: Cytochrome c oxidase subunit 3 (261 aa).

At 1-15 (MTHQTHAYHMVNPSP) the chain is on the mitochondrial matrix side. Residues 16-34 (WPLTGALSALLMTSGLIMW) form a helical membrane-spanning segment. The Mitochondrial intermembrane portion of the chain corresponds to 35 to 40 (FHFNST). A helical transmembrane segment spans residues 41 to 66 (TLLMLGLTTNMLTMYQWWRDVIREST). Over 67-72 (FQGHHT) the chain is Mitochondrial matrix. The chain crosses the membrane as a helical span at residues 73 to 105 (PNVQKGLRYGMILFIISEVLFFTGFFWAFYHSS). The Mitochondrial intermembrane segment spans residues 106–128 (LAPTPELGGCWPPTGINPLNPLE). Residues 129–152 (VPLLNTSVLLASGVSITWAHHSLM) traverse the membrane as a helical segment. The Mitochondrial matrix segment spans residues 153–155 (EGN). Residues 156–183 (RNHMLQALFITIALGVYFTLLQASEYYE) form a helical membrane-spanning segment. At 184–190 (APFTISD) the chain is on the mitochondrial intermembrane side. Residues 191–223 (GVYGSTFFVATGFHGLHVIIGSTFLIVCFFRQL) traverse the membrane as a helical segment. At 224–232 (KFHFTSNHH) the chain is on the mitochondrial matrix side. A helical transmembrane segment spans residues 233–256 (FGFEAAAWYWHFVDVVWLFLYVSI). Residues 257–261 (YWWGS) are Mitochondrial intermembrane-facing.

The protein belongs to the cytochrome c oxidase subunit 3 family. In terms of assembly, component of the cytochrome c oxidase (complex IV, CIV), a multisubunit enzyme composed of 14 subunits. The complex is composed of a catalytic core of 3 subunits MT-CO1, MT-CO2 and MT-CO3, encoded in the mitochondrial DNA, and 11 supernumerary subunits COX4I, COX5A, COX5B, COX6A, COX6B, COX6C, COX7A, COX7B, COX7C, COX8 and NDUFA4, which are encoded in the nuclear genome. The complex exists as a monomer or a dimer and forms supercomplexes (SCs) in the inner mitochondrial membrane with NADH-ubiquinone oxidoreductase (complex I, CI) and ubiquinol-cytochrome c oxidoreductase (cytochrome b-c1 complex, complex III, CIII), resulting in different assemblies (supercomplex SCI(1)III(2)IV(1) and megacomplex MCI(2)III(2)IV(2)).

The protein resides in the mitochondrion inner membrane. The catalysed reaction is 4 Fe(II)-[cytochrome c] + O2 + 8 H(+)(in) = 4 Fe(III)-[cytochrome c] + 2 H2O + 4 H(+)(out). Functionally, component of the cytochrome c oxidase, the last enzyme in the mitochondrial electron transport chain which drives oxidative phosphorylation. The respiratory chain contains 3 multisubunit complexes succinate dehydrogenase (complex II, CII), ubiquinol-cytochrome c oxidoreductase (cytochrome b-c1 complex, complex III, CIII) and cytochrome c oxidase (complex IV, CIV), that cooperate to transfer electrons derived from NADH and succinate to molecular oxygen, creating an electrochemical gradient over the inner membrane that drives transmembrane transport and the ATP synthase. Cytochrome c oxidase is the component of the respiratory chain that catalyzes the reduction of oxygen to water. Electrons originating from reduced cytochrome c in the intermembrane space (IMS) are transferred via the dinuclear copper A center (CU(A)) of subunit 2 and heme A of subunit 1 to the active site in subunit 1, a binuclear center (BNC) formed by heme A3 and copper B (CU(B)). The BNC reduces molecular oxygen to 2 water molecules using 4 electrons from cytochrome c in the IMS and 4 protons from the mitochondrial matrix. In Gazella subgutturosa (Goitred gazelle), this protein is Cytochrome c oxidase subunit 3 (MT-CO3).